The following is a 99-amino-acid chain: Aspartyl/glutamyl-tRNA(Asn/Gln) amidotransferase subunit C (99 aa).

The protein belongs to the GatC family. Heterotrimer of A, B and C subunits.

It catalyses the reaction L-glutamyl-tRNA(Gln) + L-glutamine + ATP + H2O = L-glutaminyl-tRNA(Gln) + L-glutamate + ADP + phosphate + H(+). The enzyme catalyses L-aspartyl-tRNA(Asn) + L-glutamine + ATP + H2O = L-asparaginyl-tRNA(Asn) + L-glutamate + ADP + phosphate + 2 H(+). Functionally, allows the formation of correctly charged Asn-tRNA(Asn) or Gln-tRNA(Gln) through the transamidation of misacylated Asp-tRNA(Asn) or Glu-tRNA(Gln) in organisms which lack either or both of asparaginyl-tRNA or glutaminyl-tRNA synthetases. The reaction takes place in the presence of glutamine and ATP through an activated phospho-Asp-tRNA(Asn) or phospho-Glu-tRNA(Gln). This chain is Aspartyl/glutamyl-tRNA(Asn/Gln) amidotransferase subunit C, found in Paraburkholderia phytofirmans (strain DSM 17436 / LMG 22146 / PsJN) (Burkholderia phytofirmans).